The primary structure comprises 511 residues: Putative thymidine phosphorylase 1 (511 aa).

The protein belongs to the thymidine/pyrimidine-nucleoside phosphorylase family. Type 2 subfamily.

It catalyses the reaction thymidine + phosphate = 2-deoxy-alpha-D-ribose 1-phosphate + thymine. The sequence is that of Putative thymidine phosphorylase 1 from Acidovorax sp. (strain JS42).